Consider the following 273-residue polypeptide: Large ribosomal subunit protein uL2 (273 aa).

The disordered stretch occupies residues 221–262; it reads RGTAMNPVDHPHGGGEGRNFGKHPVTPWGVQTKGKKTRHNKR. Residues 253-262 show a composition bias toward basic residues; that stretch reads KGKKTRHNKR.

Belongs to the universal ribosomal protein uL2 family. As to quaternary structure, part of the 50S ribosomal subunit. Forms a bridge to the 30S subunit in the 70S ribosome.

Functionally, one of the primary rRNA binding proteins. Required for association of the 30S and 50S subunits to form the 70S ribosome, for tRNA binding and peptide bond formation. It has been suggested to have peptidyltransferase activity; this is somewhat controversial. Makes several contacts with the 16S rRNA in the 70S ribosome. The protein is Large ribosomal subunit protein uL2 of Haemophilus influenzae (strain ATCC 51907 / DSM 11121 / KW20 / Rd).